A 633-amino-acid polypeptide reads, in one-letter code: Protein CASP (633 aa).

The Cytoplasmic portion of the chain corresponds to 1-601 (MAVASEALLQ…LLFSRATRGL (601 aa)). The disordered stretch occupies residues 39–60 (QKTSLDERKELSSKTKEFRKQP). Coiled coils occupy residues 111–339 (IEAA…LANK) and 369–433 (SLES…VDVE). Residues 602 to 622 (FFMYLILLHLFIMIVLLKLGI) form a helical; Anchor for type IV membrane protein membrane-spanning segment. The Lumenal segment spans residues 623–633 (AGNTAYTPMNY).

It belongs to the CASP family.

Its subcellular location is the golgi apparatus membrane. Functionally, may be involved in intra-Golgi transport. The polypeptide is Protein CASP (coy1) (Schizosaccharomyces pombe (strain 972 / ATCC 24843) (Fission yeast)).